The following is a 352-amino-acid chain: 3-isopropylmalate dehydrogenase (352 aa).

NAD(+) is bound at residue Gly-71–Glu-87. Substrate is bound by residues Arg-94, Arg-104, Arg-132, and Asp-218. Mg(2+) contacts are provided by Asp-218, Asp-242, and Asp-246. Gly-275 to Asn-287 is an NAD(+) binding site.

Belongs to the isocitrate and isopropylmalate dehydrogenases family. LeuB type 1 subfamily. Homodimer. Mg(2+) serves as cofactor. It depends on Mn(2+) as a cofactor.

It localises to the cytoplasm. It catalyses the reaction (2R,3S)-3-isopropylmalate + NAD(+) = 4-methyl-2-oxopentanoate + CO2 + NADH. Its pathway is amino-acid biosynthesis; L-leucine biosynthesis; L-leucine from 3-methyl-2-oxobutanoate: step 3/4. In terms of biological role, catalyzes the oxidation of 3-carboxy-2-hydroxy-4-methylpentanoate (3-isopropylmalate) to 3-carboxy-4-methyl-2-oxopentanoate. The product decarboxylates to 4-methyl-2 oxopentanoate. The protein is 3-isopropylmalate dehydrogenase of Deinococcus radiodurans (strain ATCC 13939 / DSM 20539 / JCM 16871 / CCUG 27074 / LMG 4051 / NBRC 15346 / NCIMB 9279 / VKM B-1422 / R1).